Here is a 301-residue protein sequence, read N- to C-terminus: Probable aspartoacylase (301 aa).

2 residues coordinate Zn(2+): histidine 13 and glutamate 16. Substrate contacts are provided by residues arginine 54 and 61–62; that span reads NR. Histidine 105 contacts Zn(2+). Substrate contacts are provided by glutamate 163 and tyrosine 273.

The protein belongs to the AspA/AstE family. Aspartoacylase subfamily. Zn(2+) is required as a cofactor.

The catalysed reaction is an N-acyl-L-aspartate + H2O = a carboxylate + L-aspartate. This is Probable aspartoacylase from Prochlorococcus marinus (strain MIT 9312).